The following is a 181-amino-acid chain: Malignant T-cell-amplified sequence 1-A (181 aa).

In terms of domain architecture, PUA spans 92–171 (LPHQQVDKGA…IGIENIHYLN (80 aa)).

It belongs to the MCTS1 family.

The protein localises to the cytoplasm. Its function is as follows. Plays a role as translation enhancer and involved in cell cycle regulation. The protein is Malignant T-cell-amplified sequence 1-A (mcts1-a) of Xenopus laevis (African clawed frog).